We begin with the raw amino-acid sequence, 360 residues long: Phospho-N-acetylmuramoyl-pentapeptide-transferase (360 aa).

Helical transmembrane passes span 21-41 (YLSF…LWMG), 73-93 (TMGG…WANL), 94-114 (SNPY…VGFV), 132-152 (WKYF…YAYG), 168-188 (VMPQ…VGTS), 199-219 (GLAI…AWAT), 236-256 (ASEL…FLWF), 263-283 (VFMG…IAVL), 288-308 (LVLV…ILQV), and 338-358 (VIVR…ATLK).

It belongs to the glycosyltransferase 4 family. MraY subfamily. Requires Mg(2+) as cofactor.

The protein resides in the cell inner membrane. It carries out the reaction UDP-N-acetyl-alpha-D-muramoyl-L-alanyl-gamma-D-glutamyl-meso-2,6-diaminopimeloyl-D-alanyl-D-alanine + di-trans,octa-cis-undecaprenyl phosphate = di-trans,octa-cis-undecaprenyl diphospho-N-acetyl-alpha-D-muramoyl-L-alanyl-D-glutamyl-meso-2,6-diaminopimeloyl-D-alanyl-D-alanine + UMP. It functions in the pathway cell wall biogenesis; peptidoglycan biosynthesis. In terms of biological role, catalyzes the initial step of the lipid cycle reactions in the biosynthesis of the cell wall peptidoglycan: transfers peptidoglycan precursor phospho-MurNAc-pentapeptide from UDP-MurNAc-pentapeptide onto the lipid carrier undecaprenyl phosphate, yielding undecaprenyl-pyrophosphoryl-MurNAc-pentapeptide, known as lipid I. The polypeptide is Phospho-N-acetylmuramoyl-pentapeptide-transferase (Vibrio vulnificus (strain YJ016)).